The sequence spans 933 residues: Progesterone receptor (933 aa).

The interval 1-164 is AF3; mediates transcriptional activation; sequence MTELKAKGPR…PATQGVLSPL (164 aa). The tract at residues 1 to 256 is disordered; sequence MTELKAKGPR…AAAGGGAAAV (256 aa). A modulating, Pro-Rich region spans residues 1–566; it reads MTELKAKGPR…YSFESLPQKI (566 aa). Residue Ser20 is modified to Phosphoserine. The LXXL motif 1 motif lies at 55-59; sequence LDGLL. Ser81 is modified (phosphoserine). The LXXL motif 2 signature appears at 115-119; it reads LETLL. Residues Ser130 and Ser162 each carry the phosphoserine modification. The segment at 165–305 is mediates transcriptional transrepression; it reads MSRSGGKAGD…LATTVMDFIH (141 aa). The Nuclear localization signal motif lies at 183-187; sequence KVLPR. Phosphoserine is present on residues Ser190 and Ser213. The segment covering 220–231 has biased composition (acidic residues); that stretch reads EVEEEDGSESEE. Residues 232–246 show a composition bias toward low complexity; the sequence is SAGPLLKGKPRALGG. Position 294 is a phosphoserine; by MAPK1 (Ser294). The interval 331-378 is disordered; that stretch reads GGAGAASAFAPPRSSPSASSTPVAVGDFPDCAYPPDAEPKDDAYPLYS. Residues 335–350 show a composition bias toward low complexity; the sequence is AASAFAPPRSSPSASS. Ser345 carries the post-translational modification Phosphoserine; by MAPK. Residue Lys388 forms a Glycyl lysine isopeptide (Lys-Gly) (interchain with G-Cter in SUMO); alternate linkage. A Glycyl lysine isopeptide (Lys-Gly) (interchain with G-Cter in ubiquitin); alternate cross-link involves residue Lys388. Ser400 carries the phosphoserine; by CDK2 modification. The segment at 415–452 is disordered; the sequence is PDFPLGPPPPLPPRAPPSRPGEAAVTAAPASASVSSAS. Pro residues predominate over residues 418–433; sequence PLGPPPPLPPRAPPSR. Residues 434-452 show a composition bias toward low complexity; the sequence is PGEAAVTAAPASASVSSAS. The segment at 456 to 546 is AF1; mediates transcriptional activation; the sequence is STLECILYKA…VYPPYLNYLR (91 aa). Lys531 is covalently cross-linked (Glycyl lysine isopeptide (Lys-Gly) (interchain with G-Cter in SUMO)). 2 NR C4-type zinc fingers span residues 567-587 and 603-627; these read CLICGDEASGCHYGVLTCGSC and CAGRNDCIVDKIRRKNCPACRLRKC. The segment at residues 567–639 is a DNA-binding region (nuclear receptor); sequence CLICGDEASG…AGMVLGGRKF (73 aa). The residue at position 676 (Ser676) is a Phosphoserine. In terms of domain architecture, NR LBD spans 679–913; sequence QDIQLIPPLI…EFPEMMSEVI (235 aa). Residues 687–933 form an AF2; mediates transcriptional activation region; the sequence is LINLLMSIEP…MVKPLLFHKK (247 aa). Arg766 serves as a coordination point for progesterone.

The protein belongs to the nuclear hormone receptor family. In terms of assembly, interacts with SMARD1 and UNC45A. Interacts with CUEDC2; the interaction promotes ubiquitination, decreases sumoylation, and represses transcriptional activity. Interacts with PIAS3; the interaction promotes sumoylation of PR in a hormone-dependent manner, inhibits DNA-binding, and alters nuclear export. Interacts with SP1; the interaction requires ligand-induced phosphorylation on Ser-345 by ERK1/2-MAPK. Interacts with PRMT2. Interacts with NCOA2 and NCOA1. Interacts with KLF9. Interacts with GTF2B. In terms of processing, phosphorylated on multiple serine sites. Several of these sites are hormone-dependent. Phosphorylation on Ser-294 is highly hormone-dependent and modulates ubiquitination and sumoylation on Lys-388. Phosphorylation on Ser-102 and Ser-345 also requires induction by hormone. Basal phosphorylation on Ser-81, Ser-162, Ser-190 and Ser-400 is increased in response to progesterone and can be phosphorylated in vitro by the CDK2-A1 complex. Increased levels of phosphorylation on Ser-400 also in the presence of EGF, heregulin, IGF, PMA and FBS. Phosphorylation at this site by CDK2 is ligand-independent, and increases nuclear translocation and transcriptional activity. Phosphorylation at Ser-162 and Ser-294, but not at Ser-190, is impaired during the G(2)/M phase of the cell cycle. Phosphorylation on Ser-345 by ERK1/2 MAPK is required for interaction with SP1. Sumoylation is hormone-dependent and represses transcriptional activity. Sumoylation on all three sites is enhanced by PIAS3. Desumoylated by SENP1. Sumoylation on Lys-388, the main site of sumoylation, is repressed by ubiquitination on the same site, and modulated by phosphorylation at Ser-294. Post-translationally, ubiquitination is hormone-dependent and represses sumoylation on the same site. Promoted by MAPK-mediated phosphorylation on Ser-294. Ubiquitinated by UBR5, leading to its degradation: UBR5 specifically recognizes and binds ligand-bound PGR when it is not associated with coactivators (NCOAs). In presence of NCOAs, the UBR5-degron is not accessible, preventing its ubiquitination and degradation. In terms of processing, palmitoylated by ZDHHC7 and ZDHHC21. Palmitoylation is required for plasma membrane targeting and for rapid intracellular signaling via ERK and AKT kinases and cAMP generation.

It is found in the nucleus. The protein resides in the cytoplasm. Its function is as follows. The steroid hormones and their receptors are involved in the regulation of eukaryotic gene expression and affect cellular proliferation and differentiation in target tissues. Transcriptional activator of several progesteron-dependent promoters in a variety of cell types. Involved in activation of SRC-dependent MAPK signaling on hormone stimulation. This is Progesterone receptor (PGR) from Gorilla gorilla gorilla (Western lowland gorilla).